Here is a 194-residue protein sequence, read N- to C-terminus: E3 ubiquitin-protein ligase RNF185 (194 aa).

Positions 1 to 32 (MASKGPTTSASTKSSSTGGTSGSSSSNGAGDN) are disordered. The required for ubiquitin ligase activity and protection against ER stress-induced cell death stretch occupies residues 31–82 (DNTNQDNTFECNICLDTAKDAVISLCGHLFCWPCLHQWLETRPNRQVCPVCK). The segment at 41–82 (CNICLDTAKDAVISLCGHLFCWPCLHQWLETRPNRQVCPVCK) adopts an RING-type zinc-finger fold. Residues 92–125 (PLYGRGSTGQQDPREKTPPRPQGQRPEPENRGGF) are disordered. 2 helical membrane passes run 133-153 (GGFQMSFGIGAFPFGIFATAF) and 174-194 (QFLSRLFLFVALVIMFWLLIA).

It is found in the mitochondrion outer membrane. The protein localises to the endoplasmic reticulum membrane. It catalyses the reaction S-ubiquitinyl-[E2 ubiquitin-conjugating enzyme]-L-cysteine + [acceptor protein]-L-lysine = [E2 ubiquitin-conjugating enzyme]-L-cysteine + N(6)-ubiquitinyl-[acceptor protein]-L-lysine.. It participates in protein modification; protein ubiquitination. Functionally, E3 ubiquitin-protein ligase that regulates selective mitochondrial autophagy by mediating 'Lys-63'-linked polyubiquitination. Acts in the endoplasmic reticulum (ER)-associated degradation (ERAD) pathway, which targets misfolded proteins that accumulate in the endoplasmic reticulum (ER) for ubiquitination and subsequent proteasome-mediated degradation. Protects cells from ER stress-induced apoptosis. Responsible for the cotranslational ubiquitination and degradation of CFTR in the ERAD pathway. Also acts as a regulator of the innate antiviral response by catalyzing 'Lys-27'-linked polyubiquitination of CGAS, thereby promoting CGAS cyclic GMP-AMP synthase activity. Preferentially associates with the E2 enzymes UBE2J1 and UBE2J2. The sequence is that of E3 ubiquitin-protein ligase RNF185 (RNF185) from Gallus gallus (Chicken).